We begin with the raw amino-acid sequence, 77 residues long: Protein RALF-like 17 (77 aa).

The N-terminal stretch at 1–29 (MAASREFIICCFLTLLLCNFFMRVESGAA) is a signal peptide. Cysteine 37 and cysteine 51 are joined by a disulfide.

This sequence belongs to the plant rapid alkalinization factor (RALF) family.

The protein resides in the secreted. Functionally, cell signaling peptide that may regulate plant stress, growth, and development. Mediates a rapid alkalinization of extracellular space by mediating a transient increase in the cytoplasmic Ca(2+) concentration leading to a calcium-dependent signaling events through a cell surface receptor and a concomitant activation of some intracellular mitogen-activated protein kinases. The polypeptide is Protein RALF-like 17 (RALFL17) (Arabidopsis thaliana (Mouse-ear cress)).